The chain runs to 40 residues: Large ribosomal subunit protein bL36B (40 aa).

It belongs to the bacterial ribosomal protein bL36 family.

This is Large ribosomal subunit protein bL36B from Kocuria rhizophila (strain ATCC 9341 / DSM 348 / NBRC 103217 / DC2201).